The following is a 425-amino-acid chain: UPF0597 protein VSAL_I0741 (425 aa).

Belongs to the UPF0597 family.

The protein is UPF0597 protein VSAL_I0741 of Aliivibrio salmonicida (strain LFI1238) (Vibrio salmonicida (strain LFI1238)).